The following is a 101-amino-acid chain: Small ribosomal subunit protein uS14 (101 aa).

It belongs to the universal ribosomal protein uS14 family. As to quaternary structure, part of the 30S ribosomal subunit. Contacts proteins S3 and S10.

In terms of biological role, binds 16S rRNA, required for the assembly of 30S particles and may also be responsible for determining the conformation of the 16S rRNA at the A site. The polypeptide is Small ribosomal subunit protein uS14 (Rhizobium johnstonii (strain DSM 114642 / LMG 32736 / 3841) (Rhizobium leguminosarum bv. viciae)).